An 81-amino-acid polypeptide reads, in one-letter code: Large ribosomal subunit protein bL27 (81 aa).

The tract at residues 1 to 22 (MAHKKGQGSSRNGRDSNAQRRG) is disordered.

This sequence belongs to the bacterial ribosomal protein bL27 family.

The polypeptide is Large ribosomal subunit protein bL27 (Rhodopirellula baltica (strain DSM 10527 / NCIMB 13988 / SH1)).